Here is a 492-residue protein sequence, read N- to C-terminus: Probable cytosol aminopeptidase (492 aa).

Residues Lys-248 and Asp-253 each contribute to the Mn(2+) site. The active site involves Lys-260. Residues Asp-271, Asp-330, and Glu-332 each contribute to the Mn(2+) site. Arg-334 is a catalytic residue.

The protein belongs to the peptidase M17 family. It depends on Mn(2+) as a cofactor.

The protein resides in the cytoplasm. The enzyme catalyses Release of an N-terminal amino acid, Xaa-|-Yaa-, in which Xaa is preferably Leu, but may be other amino acids including Pro although not Arg or Lys, and Yaa may be Pro. Amino acid amides and methyl esters are also readily hydrolyzed, but rates on arylamides are exceedingly low.. It carries out the reaction Release of an N-terminal amino acid, preferentially leucine, but not glutamic or aspartic acids.. Presumably involved in the processing and regular turnover of intracellular proteins. Catalyzes the removal of unsubstituted N-terminal amino acids from various peptides. The sequence is that of Probable cytosol aminopeptidase (pepA) from Aeropyrum pernix (strain ATCC 700893 / DSM 11879 / JCM 9820 / NBRC 100138 / K1).